The chain runs to 455 residues: Keratin, type I cuticular Ha5 (455 aa).

The tract at residues 1–97 is head; that stretch reads MASKCLKASF…FGEGILTGNE (97 aa). The IF rod domain maps to 97-408; the sequence is EKETMQSLND…GLLESEDSKL (312 aa). A coil 1A region spans residues 98-132; it reads KETMQSLNDRLASYLEKVRQLEQENASLESRIREW. A linker 1 region spans residues 133–143; that stretch reads CEQQVPYMCPD. The segment at 144–244 is coil 1B; that stretch reads YQSYFRTMEE…HEEEVNSLRC (101 aa). Residues 245–260 form a linker 12 region; it reads QLGDRLNVEVDAAPPV. The tract at residues 261–404 is coil 2; sequence DLNRVLDEMR…NTYRGLLESE (144 aa). The tail stretch occupies residues 405 to 455; the sequence is DSKLPCNPCAPDYSSSKSCLPCLPAVSCSTGAARTTCSPRPVCVPCPGGRF.

The protein belongs to the intermediate filament family.

This is Keratin, type I cuticular Ha5 from Mus musculus (Mouse).